A 1069-amino-acid chain; its full sequence is Cellulose synthase A catalytic subunit 5 [UDP-forming] (1069 aa).

Residue Met1 is modified to N-acetylmethionine. Over 1–265 (MNTGGRLIAG…KSSKINPYRM (265 aa)) the chain is Cytoplasmic. Zn(2+)-binding residues include Cys39, Cys42, Cys58, Cys61, Cys66, Cys69, Cys81, and Cys84. The segment at 39-85 (CQICGDEIELSVDGESFVACNECAFPVCRPCYEYERREGNQSCPQCK) adopts an RING-type; degenerate zinc-finger fold. Residues Ser229 and Ser230 each carry the phosphoserine modification. Residues 266–286 (LIVLRLVILGLFFHYRILHPV) traverse the membrane as a helical segment. Over 287-288 (ND) the chain is Extracellular. The chain crosses the membrane as a helical span at residues 289 to 309 (AYALWLISVICEIWFAVSWVL). The Cytoplasmic portion of the chain corresponds to 310–853 (DQFPKWYPIE…INSVVYPWTS (544 aa)). The UDP-alpha-D-glucose site is built by Ser348, Lys354, Glu355, and Asp384. Asp384 is a catalytic residue. The stretch at 438–464 (VRERRAMKRDYEEFKVKINALVATAQK) forms a coiled coil. A UDP-alpha-D-glucose-binding site is contributed by Lys525. Mn(2+) is bound by residues Lys526 and Asp550. Residue Asp770 is part of the active site. The helical transmembrane segment at 854–874 (IPLLVYCSLPAICLLTGKFIV) threads the bilayer. Residues 875–879 (PEISN) are Extracellular-facing. Residues 880 to 900 (YASILFMALFGSIAVTGILEM) form a helical membrane-spanning segment. Residues 901 to 915 (QWGKVGIDDWWRNEQ) lie on the Cytoplasmic side of the membrane. The chain crosses the membrane as a helical span at residues 916-936 (FWVIGGVSAHLFALFQGLLKV). The Extracellular segment spans residues 937 to 965 (LAGVETNFTVTSKAADDGEFSELYIFKWT). N-linked (GlcNAc...) asparagine glycosylation occurs at Asn943. Residues 966-986 (SLLIPPTTLLIINVIGVIVGI) traverse the membrane as a helical segment. Residues 987–997 (SDAISNGYDSW) are Cytoplasmic-facing. The chain crosses the membrane as a helical span at residues 998-1018 (GPLFGRLFFAFWVILHLYPFL). Residues 1019–1027 (KGLLGKQDR) are Extracellular-facing. A helical transmembrane segment spans residues 1028–1048 (MPTIILVWSILLASILTLLWV). The Cytoplasmic portion of the chain corresponds to 1049–1069 (RVNPFVAKGGPILEICGLDCL).

Belongs to the glycosyltransferase 2 family. Plant cellulose synthase subfamily. Zn(2+) serves as cofactor. Mn(2+) is required as a cofactor. Expressed in young plants, stems and flowers.

It is found in the cell membrane. It catalyses the reaction [(1-&gt;4)-beta-D-glucosyl](n) + UDP-alpha-D-glucose = [(1-&gt;4)-beta-D-glucosyl](n+1) + UDP + H(+). It functions in the pathway glycan metabolism; plant cellulose biosynthesis. Its function is as follows. Catalytic subunit of cellulose synthase terminal complexes ('rosettes'), required for beta-1,4-glucan microfibril crystallization, a major mechanism of the cell wall formation. The protein is Cellulose synthase A catalytic subunit 5 [UDP-forming] of Arabidopsis thaliana (Mouse-ear cress).